The following is a 393-amino-acid chain: MAELRQVPGGRETPQGELRPEVVEDEVPRSPVAEEPGGGGSSSSEAKLSPREEEELDPRIQEELEHLNQASEEINQVELQLDEARTTYRRILQESARKLNTQGSHLGSCIEKARPYYEARRLAKEAQQETQKAALRYERAVSMHNAAREMVFVAEQGVMADKNRLDPTWQEMLNHATCKVNEAEEERLRGEREHQRVTRLCQQAEARVQALQKTLRRAIGKSRPYFELKAQFSQILEEHKAKVTELEQQVAQAKTRYSVALRNLEQISEQIHARRRGGLPPHPLGPRRSSPVGAEAGPEDMEDGDSGIEGAEGAGLEEGSSLGPGPAPDTDTLSLLSLRTVASDLQKCDSVEHLRGLSDHVSLDGQELGTRSGGRRGSDGGARGGRHQRSVSL.

The interval 1–58 is disordered; it reads MAELRQVPGGRETPQGELRPEVVEDEVPRSPVAEEPGGGGSSSSEAKLSPREEEELDP. Position 13 is a phosphothreonine (threonine 13). Positions 18–28 are enriched in basic and acidic residues; it reads LRPEVVEDEVP. A phosphoserine mark is found at serine 30 and serine 49. 2 coiled-coil regions span residues 59–140 and 169–272; these read RIQE…YERA and WQEM…EQIH. Residues 273 to 332 are disordered; it reads ARRRGGLPPHPLGPRRSSPVGAEAGPEDMEDGDSGIEGAEGAGLEEGSSLGPGPAPDTDT. Residues 297-306 are compositionally biased toward acidic residues; sequence GPEDMEDGDS. Residues 317–332 are compositionally biased toward low complexity; sequence EEGSSLGPGPAPDTDT. A phosphoserine mark is found at serine 343, serine 350, serine 358, serine 362, and serine 378. The disordered stretch occupies residues 362–393; the sequence is SLDGQELGTRSGGRRGSDGGARGGRHQRSVSL. The span at 384–393 shows a compositional bias: basic residues; that stretch reads GGRHQRSVSL.

This sequence belongs to the SH3BP5 family.

Functionally, functions as a guanine nucleotide exchange factor (GEF) for RAB11A. The protein is SH3 domain-binding protein 5-like (SH3BP5L) of Homo sapiens (Human).